The primary structure comprises 139 residues: Large ribosomal subunit protein uL13 (139 aa).

Belongs to the universal ribosomal protein uL13 family. In terms of assembly, part of the 50S ribosomal subunit.

Its function is as follows. This protein is one of the early assembly proteins of the 50S ribosomal subunit, although it is not seen to bind rRNA by itself. It is important during the early stages of 50S assembly. This is Large ribosomal subunit protein uL13 from Wolinella succinogenes (strain ATCC 29543 / DSM 1740 / CCUG 13145 / JCM 31913 / LMG 7466 / NCTC 11488 / FDC 602W) (Vibrio succinogenes).